The primary structure comprises 158 residues: 3-hydroxyacyl-[acyl-carrier-protein] dehydratase FabZ (158 aa).

Residue histidine 61 is part of the active site.

Belongs to the thioester dehydratase family. FabZ subfamily.

It localises to the cytoplasm. The catalysed reaction is a (3R)-hydroxyacyl-[ACP] = a (2E)-enoyl-[ACP] + H2O. Functionally, involved in unsaturated fatty acids biosynthesis. Catalyzes the dehydration of short chain beta-hydroxyacyl-ACPs and long chain saturated and unsaturated beta-hydroxyacyl-ACPs. The chain is 3-hydroxyacyl-[acyl-carrier-protein] dehydratase FabZ from Methylobacterium radiotolerans (strain ATCC 27329 / DSM 1819 / JCM 2831 / NBRC 15690 / NCIMB 10815 / 0-1).